Reading from the N-terminus, the 94-residue chain is Putative regulatory protein Sfum_3631 (94 aa).

Belongs to the RemA family.

The sequence is that of Putative regulatory protein Sfum_3631 from Syntrophobacter fumaroxidans (strain DSM 10017 / MPOB).